The sequence spans 47 residues: Large ribosomal subunit protein bL34 (47 aa).

Belongs to the bacterial ribosomal protein bL34 family.

The protein is Large ribosomal subunit protein bL34 (rpmH) of Mycolicibacterium smegmatis (strain ATCC 700084 / mc(2)155) (Mycobacterium smegmatis).